A 163-amino-acid polypeptide reads, in one-letter code: MASMTDQQAEARAFLSEEMIAEFKAAFDMFDADGGGDISTKELGTVMRMLGQNPTKEELDAIIEEVDEDGSGTIDFEEFLVMMVRQMKEDAKGKSEEELANCFRIFDKNADGFIDIEELGEILRATGEHVTEEDIEDLMKDSDKNNDGRIDFDEFLKMMEGVQ.

Ala2 carries the post-translational modification Blocked amino end (Ala). 4 EF-hand domains span residues 18–53 (EMIAEFKAAFDMFDADGGGDISTKELGTVMRMLGQN), 54–89 (PTKEELDAIIEEVDEDGSGTIDFEEFLVMMVRQMKE), 94–129 (KSEEELANCFRIFDKNADGFIDIEELGEILRATGEH), and 130–163 (VTEEDIEDLMKDSDKNNDGRIDFDEFLKMMEGVQ). Positions 31, 33, 37, 42, 67, 69, 71, 73, 78, 107, 109, 111, 118, 143, 145, 147, 149, and 154 each coordinate Ca(2+).

It belongs to the troponin C family.

Functionally, troponin is the central regulatory protein of striated muscle contraction. Tn consists of three components: Tn-I which is the inhibitor of actomyosin ATPase, Tn-T which contains the binding site for tropomyosin and Tn-C. The binding of calcium to Tn-C abolishes the inhibitory action of Tn on actin filaments. The sequence is that of Troponin C, skeletal muscle (TNNC2) from Gallus gallus (Chicken).